The primary structure comprises 602 residues: Potassium voltage-gated channel subfamily A member 5 (602 aa).

The tract at residues 1 to 202 (MEISLVPLEN…FYQLGDEAME (202 aa)) is tetramerization domain. At 1–238 (MEISLVPLEN…LIFEYPESSG (238 aa)) the chain is on the cytoplasmic side. The segment at 58–107 (EDANQGGRPLPPMAQELPQPRRLSAEDEEGEGDPGLGTVEEDQAPQDAGS) is disordered. A Phosphoserine; by CK2 and PKA modification is found at Ser-81. Lys-212 is covalently cross-linked (Glycyl lysine isopeptide (Lys-Gly) (interchain with G-Cter in SUMO)). A helical transmembrane segment spans residues 239–260 (SARAIAIVSVLVILISIITFCL). Residues 261 to 314 (ETLPEFRDERELLRHPPVPPQPPAPAPGINGSVSGALSSGPTVAPLLPRTLADP) are Extracellular-facing. The helical transmembrane segment at 315-336 (FFIVETTCVIWFTFELLVRFFA) threads the bilayer. Cys-337 is lipidated: S-palmitoyl cysteine. The Cytoplasmic segment spans residues 337 to 347 (CPSKAEFSRNI). A helical transmembrane segment spans residues 348-368 (MNIIDVVAIFPYFITLGTELA). Over 369 to 384 (EQQPGGGGQNGQQAMS) the chain is Extracellular. A helical; Voltage-sensor membrane pass occupies residues 385–405 (LAILRVIRLVRVFRIFKLSRH). The Cytoplasmic portion of the chain corresponds to 406-420 (SKGLQILGKTLQASM). The segment at 407 to 420 (KGLQILGKTLQASM) is S4-S5 linker. A helical transmembrane segment spans residues 421 to 442 (RELGLLIFFLFIGVILFSSAVY). Residues 443–456 (FAEADNHGSHFSSI) are Extracellular-facing. An intramembrane region (helical) is located at residues 457-468 (PDAFWWAVVTMT). The Selectivity filter signature appears at 469-474 (TVGYGD). Residues 469 to 476 (TVGYGDMR) lie within the membrane without spanning it. The Extracellular segment spans residues 477–483 (PITVGGK). Residues 484-512 (IVGSLCAIAGVLTIALPVPVIVSNFNYFY) form a helical membrane-spanning segment. The Cytoplasmic portion of the chain corresponds to 513–602 (HRETDHEEQA…CLDTSRETDL (90 aa)). The segment covering 523-536 (ALKEEQGNQRRESG) has biased composition (basic and acidic residues). The segment at 523–543 (ALKEEQGNQRRESGLDTGGQR) is disordered. Lys-525 is covalently cross-linked (Glycyl lysine isopeptide (Lys-Gly) (interchain with G-Cter in SUMO)). Residues Ser-535, Ser-546, and Ser-569 each carry the phosphoserine; by PKA modification. Residues 600-602 (TDL) carry the PDZ-binding motif.

This sequence belongs to the potassium channel family. A (Shaker) (TC 1.A.1.2) subfamily. Kv1.5/KCNA5 sub-subfamily. As to quaternary structure, homotetramer and heterotetramer of potassium channel proteins. Interacts with DLG1, which enhances channel currents. Forms a ternary complex with DLG1 and CAV3. Interacts with KCNAB1. Interacts with UBE2I. Interacts with XIRP2; the interaction is required for normal action potential configuration in the heart. Glycosylated. In terms of processing, sumoylated on Lys-212, and Lys-525, preferentially with SUMO3. Sumoylation regulates the voltage sensitivity of the channel. Expressed equally in atrium, ventricle, aorta and skeletal muscle. Weaker expression in brain.

It localises to the cell membrane. It carries out the reaction K(+)(in) = K(+)(out). Voltage-gated potassium channel that mediates transmembrane potassium transport in excitable membranes. Forms tetrameric potassium-selective channels through which potassium ions pass in accordance with their electrochemical gradient. The channel alternates between opened and closed conformations in response to the voltage difference across the membrane. Can form functional homotetrameric channels and heterotetrameric channels that contain variable proportions of KCNA1, KCNA2, KCNA4, KCNA5, and possibly other family members as well; channel properties depend on the type of alpha subunits that are part of the channel. Channel properties are modulated by cytoplasmic beta subunits that regulate the subcellular location of the alpha subunits and promote rapid inactivation. Homotetrameric channels display rapid activation and slow inactivation. Required for normal electrical conduction including formation of the infranodal ventricular conduction system and normal action potential configuration, as a result of its interaction with XIRP2. May play a role in regulating the secretion of insulin in normal pancreatic islets. This is Potassium voltage-gated channel subfamily A member 5 (Kcna5) from Rattus norvegicus (Rat).